The following is a 249-amino-acid chain: 2,3-bisphosphoglycerate-dependent phosphoglycerate mutase (249 aa).

Residues 8 to 15 (RHGESQWN), 21 to 22 (TG), Arg-60, 87 to 90 (ERHY), Lys-98, 114 to 115 (RR), and 183 to 184 (GN) contribute to the substrate site. His-9 acts as the Tele-phosphohistidine intermediate in catalysis. Residue Glu-87 is the Proton donor/acceptor of the active site.

This sequence belongs to the phosphoglycerate mutase family. BPG-dependent PGAM subfamily.

It catalyses the reaction (2R)-2-phosphoglycerate = (2R)-3-phosphoglycerate. The protein operates within carbohydrate degradation; glycolysis; pyruvate from D-glyceraldehyde 3-phosphate: step 3/5. In terms of biological role, catalyzes the interconversion of 2-phosphoglycerate and 3-phosphoglycerate. In Pelodictyon phaeoclathratiforme (strain DSM 5477 / BU-1), this protein is 2,3-bisphosphoglycerate-dependent phosphoglycerate mutase.